We begin with the raw amino-acid sequence, 230 residues long: MSEHKKLLKNGMWDNNPALVQLLGLCPLLAVSSTVTNALGLGIATLLVLVGSNVTVSLIRNYVPKEIRIPVFVMIIASLVTCVQLLMNAYAYGLYLSLGIFIPLIVTNCIIIGRAEAYASKNDPLPAALDGFWMGMGMTTVLVVLGAMREIIGNGTLFDGADLLLGEWASALRIQVFQFDSSFLLALLPPGAFIGVGLLIALKNVIDTQLKARQPKQEKPAIERARVTNA.

Helical transmembrane passes span 39–59 (LGLGIATLLVLVGSNVTVSLI), 69–89 (IPVFVMIIASLVTCVQLLMNA), 93–113 (GLYLSLGIFIPLIVTNCIIIG), 125–145 (LPAALDGFWMGMGMTTVLVVL), and 182–202 (SFLLALLPPGAFIGVGLLIAL).

It belongs to the NqrDE/RnfAE family. As to quaternary structure, the complex is composed of six subunits: RnfA, RnfB, RnfC, RnfD, RnfE and RnfG.

The protein localises to the cell inner membrane. In terms of biological role, part of a membrane-bound complex that couples electron transfer with translocation of ions across the membrane. In Vibrio vulnificus (strain YJ016), this protein is Ion-translocating oxidoreductase complex subunit E.